The sequence spans 354 residues: Small ribosomal subunit biogenesis GTPase RsgA 1 (354 aa).

Basic residues predominate over residues 1–24 (MAKKKKLTKGQVRRVRSNQQKRLK). The interval 1-28 (MAKKKKLTKGQVRRVRSNQQKRLKKQEE) is disordered. The CP-type G domain occupies 113 to 274 (YDGLKPVAAN…LIDSPGVREF (162 aa)). Residues 160–163 (NKVD) and 214–222 (GQSGVGKSS) each bind GTP. Zn(2+)-binding residues include C298, C303, H305, and C311.

It belongs to the TRAFAC class YlqF/YawG GTPase family. RsgA subfamily. As to quaternary structure, monomer. Associates with 30S ribosomal subunit, binds 16S rRNA. Requires Zn(2+) as cofactor.

It localises to the cytoplasm. In terms of biological role, one of several proteins that assist in the late maturation steps of the functional core of the 30S ribosomal subunit. Helps release RbfA from mature subunits. May play a role in the assembly of ribosomal proteins into the subunit. Circularly permuted GTPase that catalyzes slow GTP hydrolysis, GTPase activity is stimulated by the 30S ribosomal subunit. The sequence is that of Small ribosomal subunit biogenesis GTPase RsgA 1 from Vibrio parahaemolyticus serotype O3:K6 (strain RIMD 2210633).